The sequence spans 373 residues: Glutamine synthetase (373 aa).

Thr2 is modified (N-acetylthreonine). The required for glutamine-induced ubiquitination by CRL4(CRBN) and proteasomal degradation stretch occupies residues 2-25 (TTSASSHLNKGIKQVYMSLPQGEK). Lys11 and Lys14 each carry N6-acetyllysine; by EP300. The 83-residue stretch at 24-106 (EKVQAMYIWI…VLCEVFKYNR (83 aa)) folds into the GS beta-grasp domain. A Phosphotyrosine modification is found at Tyr104. A GS catalytic domain is found at 113–373 (LRHTCKRIMD…TGDEPFQYKN (261 aa)). Glu134 is a binding site for ATP. 4 residues coordinate Mn(2+): Glu134, Glu136, Glu196, and Glu203. 203–208 (EFQIGP) contributes to the ATP binding site. 246–247 (NW) serves as a coordination point for L-glutamate. His253 contacts Mn(2+). ATP-binding positions include 255–257 (NFS), Arg319, and Arg324. Arg319 lines the L-glutamate pocket. Residue 336-338 (YFE) coordinates ADP. Glu338 is a binding site for Mn(2+). Arg340 is a binding site for L-glutamate. A Phosphoserine modification is found at Ser343.

Belongs to the glutamine synthetase family. As to quaternary structure, decamer; composed of two pentamers. Interacts with PALMD. Interacts with RHOJ. Interacts with BEST2; this interaction tethers a fraction of GLUL to the membrane, causing a decrease of cytosolic glutamine synthase (GS) activity and inhibits the chloride channel activity of BEST2 by affecting the gating at the aperture in the absence of intracellular glutamate. Requires Mg(2+) as cofactor. Mn(2+) serves as cofactor. Post-translationally, acetylated by EP300/p300; acetylation is stimulated by increased glutamine levels and promotes ubiquitin-mediated proteasomal degradation. Palmitoylated; undergoes autopalmitoylation. In terms of processing, ubiquitinated by ZNRF1. Ubiquitinated by the DCX (DDB1-CUL4-X-box) E3 ubiquitin-protein ligase complex called CRL4(CRBN), leading to proteasomal degradation. In terms of tissue distribution, expressed in endothelial cells.

It is found in the cytoplasm. The protein localises to the cytosol. The protein resides in the microsome. Its subcellular location is the mitochondrion. It localises to the cell membrane. The enzyme catalyses L-glutamate + NH4(+) + ATP = L-glutamine + ADP + phosphate + H(+). The catalysed reaction is L-cysteinyl-[protein] + hexadecanoyl-CoA = S-hexadecanoyl-L-cysteinyl-[protein] + CoA. With respect to regulation, glutamine synthetase activity is inhibited by methionine sulfoximine (MSO). In terms of biological role, glutamine synthetase that catalyzes the ATP-dependent conversion of glutamate and ammonia to glutamine. Its role depends on tissue localization: in the brain, it regulates the levels of toxic ammonia and converts neurotoxic glutamate to harmless glutamine, whereas in the liver, it is one of the enzymes responsible for the removal of ammonia. Plays a key role in ammonium detoxification during erythropoiesis: the glutamine synthetase activity is required to remove ammonium generated by porphobilinogen deaminase (HMBS) during heme biosynthesis to prevent ammonium accumulation and oxidative stress. Essential for proliferation of fetal skin fibroblasts. Independently of its glutamine synthetase activity, required for endothelial cell migration during vascular development: acts by regulating membrane localization and activation of the GTPase RHOJ, possibly by promoting RHOJ palmitoylation. May act as a palmitoyltransferase for RHOJ: able to autopalmitoylate and then transfer the palmitoyl group to RHOJ. Plays a role in ribosomal 40S subunit biogenesis. Through the interaction with BEST2, inhibits BEST2 channel activity by affecting the gating at the aperture in the absence of intracellular L-glutamate, but sensitizes BEST2 to intracellular L-glutamate, which promotes the opening of BEST2 and thus relieves its inhibitory effect on BEST2. The protein is Glutamine synthetase of Homo sapiens (Human).